The sequence spans 554 residues: Glucose-6-phosphate isomerase 2 (554 aa).

Glu-359 (proton donor) is an active-site residue. Residues His-390 and Lys-518 contribute to the active site.

This sequence belongs to the GPI family.

The protein resides in the cytoplasm. The catalysed reaction is alpha-D-glucose 6-phosphate = beta-D-fructose 6-phosphate. It functions in the pathway carbohydrate biosynthesis; gluconeogenesis. The protein operates within carbohydrate degradation; glycolysis; D-glyceraldehyde 3-phosphate and glycerone phosphate from D-glucose: step 2/4. In terms of biological role, catalyzes the reversible isomerization of glucose-6-phosphate to fructose-6-phosphate. This is Glucose-6-phosphate isomerase 2 from Pseudomonas putida (strain ATCC 47054 / DSM 6125 / CFBP 8728 / NCIMB 11950 / KT2440).